The chain runs to 110 residues: Progonadoliberin-2 (110 aa).

Positions 1 to 26 (MASIGQGLVLLLLLLLLTAQPGPLKA) are cleaved as a signal peptide. Positions 25-85 (KAQHWSHGWY…KALAPPEDTV (61 aa)) are disordered. G36 is modified (glycine amide).

Belongs to the GnRH family. As to expression, midbrain.

It localises to the secreted. Functionally, stimulates the secretion of gonadotropins; it stimulates the secretion of both luteinizing and follicle-stimulating hormones. The polypeptide is Progonadoliberin-2 (GNRH2) (Suncus murinus (Asian house shrew)).